Here is a 539-residue protein sequence, read N- to C-terminus: Phosphoenolpyruvate carboxykinase (ATP) (539 aa).

Substrate contacts are provided by R64, Y206, and K212. Residues K212, H231, and 247–255 (GLSGTGKTT) contribute to the ATP site. Mn(2+) is bound by residues K212 and H231. Residue D268 coordinates Mn(2+). ATP contacts are provided by residues E296, R332, 448–449 (RI), and T454. Residue R332 participates in substrate binding.

This sequence belongs to the phosphoenolpyruvate carboxykinase (ATP) family. As to quaternary structure, monomer. Mn(2+) serves as cofactor.

Its subcellular location is the cytoplasm. The enzyme catalyses oxaloacetate + ATP = phosphoenolpyruvate + ADP + CO2. It participates in carbohydrate biosynthesis; gluconeogenesis. In terms of biological role, involved in the gluconeogenesis. Catalyzes the conversion of oxaloacetate (OAA) to phosphoenolpyruvate (PEP) through direct phosphoryl transfer between the nucleoside triphosphate and OAA. The protein is Phosphoenolpyruvate carboxykinase (ATP) of Yersinia pestis bv. Antiqua (strain Antiqua).